The primary structure comprises 694 residues: Polyribonucleotide nucleotidyltransferase (694 aa).

Mg(2+) is bound by residues aspartate 485 and aspartate 491. Residues 552–611 (PRIETMQIKPNKIATVIGPGGKQIRQIIEEAGVQIDINDSGLVSISASSPQAIEKAKSII) form the KH domain. One can recognise an S1 motif domain in the interval 621–689 (GKIYEGRVTS…EKGQYKLSHK (69 aa)).

Belongs to the polyribonucleotide nucleotidyltransferase family. Requires Mg(2+) as cofactor.

It localises to the cytoplasm. It carries out the reaction RNA(n+1) + phosphate = RNA(n) + a ribonucleoside 5'-diphosphate. Involved in mRNA degradation. Catalyzes the phosphorolysis of single-stranded polyribonucleotides processively in the 3'- to 5'-direction. The protein is Polyribonucleotide nucleotidyltransferase of Chlamydia abortus (strain DSM 27085 / S26/3) (Chlamydophila abortus).